Consider the following 364-residue polypeptide: Cell division protein FtsZ 1 (364 aa).

Residues Gly-47 to Ala-48, Ala-97 to Gly-99, Gly-134 to Gly-136, Glu-165, Arg-169, and Asp-212 contribute to the GTP site.

It belongs to the FtsZ family. As to quaternary structure, homodimer. Polymerizes to form a dynamic ring structure in a strictly GTP-dependent manner. Interacts directly with several other division proteins.

The protein resides in the cytoplasm. Functionally, essential cell division protein that forms a contractile ring structure (Z ring) at the future cell division site. The regulation of the ring assembly controls the timing and the location of cell division. One of the functions of the FtsZ ring is to recruit other cell division proteins to the septum to produce a new cell wall between the dividing cells. Binds GTP and shows GTPase activity. The chain is Cell division protein FtsZ 1 from Methanocaldococcus jannaschii (strain ATCC 43067 / DSM 2661 / JAL-1 / JCM 10045 / NBRC 100440) (Methanococcus jannaschii).